We begin with the raw amino-acid sequence, 172 residues long: Regulator of hemoglobinization and erythroid cell expansion protein (172 aa).

Residues 9-29 (WHGLVIAVVSLFLQACFLTAI) traverse the membrane as a helical segment. The disordered stretch occupies residues 52–106 (VPRPSPGHHHPPAVKEMKETQTERDIPMSDSLYRHDSDTPSDSLDSSCSSPPACQ). Over residues 64–89 (AVKEMKETQTERDIPMSDSLYRHDSD) the composition is skewed to basic and acidic residues. Low complexity predominate over residues 91-103 (PSDSLDSSCSSPP). A phosphotyrosine mark is found at Tyr132 and Tyr141.

As to quaternary structure, interacts with EPOR; this interaction occurs in a erythropoietin (EPO)-dependent manner. Interacts with JAK2; this interaction occurs in a erythropoietin (EPO)-dependent manner. Interacts (via tyrosine-phosphorylated form) with GRB2. Post-translationally, phosphorylated. Phosphorylation on Tyr-132 and Tyr-141 occurs in a erythropoietin (EPO)-dependent manner. As to expression, expressed in the proerythroblasts (at protein level). Expressed strongly in the kidney. Expressed weakly in the pancreas, liver and lung. Expressed strongly in erythroid progenitor cells (EPCs). Expressed weakly in T-cells and neutrophils.

The protein localises to the cell membrane. Functionally, acts as a signaling transduction factor of the EPO-EPOR signaling pathway promoting erythroid cell differentiation. The sequence is that of Regulator of hemoglobinization and erythroid cell expansion protein from Homo sapiens (Human).